The sequence spans 216 residues: MOB kinase activator 1A (216 aa).

At serine 2 the chain carries N-acetylserine. A phosphothreonine mark is found at threonine 12 and threonine 35. The residue at position 74 (threonine 74) is a Phosphothreonine; by STK3/MST2. Zn(2+)-binding residues include cysteine 79, cysteine 84, histidine 161, and histidine 166. Residue threonine 181 is modified to Phosphothreonine.

The protein belongs to the MOB1/phocein family. In terms of assembly, binds STK38 and STK38L. Interacts with LATS1 and LATS2. Forms a tripartite complex with STK38 and STK3/MST2. In terms of processing, phosphorylated by STK3/MST2 and STK4/MST1 and this phosphorylation enhances its binding to LATS1. Adrenal gland, bone marrow, brain, placenta, prostate, salivary gland, skeletal muscle, testis, thymus, thyroid gland, heart, spinal cord, fetal brain and fetal liver.

Its function is as follows. Activator of LATS1/2 in the Hippo signaling pathway which plays a pivotal role in organ size control and tumor suppression by restricting proliferation and promoting apoptosis. The core of this pathway is composed of a kinase cascade wherein STK3/MST2 and STK4/MST1, in complex with its regulatory protein SAV1, phosphorylates and activates LATS1/2 in complex with its regulatory protein MOB1, which in turn phosphorylates and inactivates YAP1 oncoprotein and WWTR1/TAZ. Phosphorylation of YAP1 by LATS1/2 inhibits its translocation into the nucleus to regulate cellular genes important for cell proliferation, cell death, and cell migration. Stimulates the kinase activity of STK38 and STK38L. Acts cooperatively with STK3/MST2 to activate STK38. This Homo sapiens (Human) protein is MOB kinase activator 1A.